A 517-amino-acid chain; its full sequence is MFS-type transporter avaJ (517 aa).

Residues 1–12 (MTSPEHSEDERQ) show a composition bias toward basic and acidic residues. The interval 1–28 (MTSPEHSEDERQPLLTKPSGPDESQSGF) is disordered. The chain crosses the membrane as a helical span at residues 40 to 60 (AMWLLPMYTLYAITAGSLIIP). Asn63 is a glycosylation site (N-linked (GlcNAc...) asparagine). 5 helical membrane-spanning segments follow: residues 103 to 123 (IYGTVLSGILGAIAGPNLMGF), 131 to 151 (PILLISVLGPLIADIIVLAAL), 161 to 181 (WLLVGYAMDGLSGSIITATTA), 204 to 224 (AAFTSAFALGPLIAGGLLSVF), and 230 to 250 (AYWLAFTIHLSLIVLFTLALP). N-linked (GlcNAc...) asparagine glycosylation is present at Asn265. The next 5 membrane-spanning stretches (helical) occupy residues 299–319 (MYIVAVTEAALFGVSMGLVPL), 338–358 (FLTGVNLWSILVLVAVVPLFM), 391–411 (LLLQVAGYITIAVVHSPLGVI), 442–462 (VLLGAVSFLHAISRILLPSGM), and 476–496 (ALFALLGFGSGIFLVASMFIG). 2 N-linked (GlcNAc...) asparagine glycosylation sites follow: Asn497 and Asn512.

It belongs to the major facilitator superfamily. TCR/Tet family.

It is found in the membrane. It participates in secondary metabolite biosynthesis. Functionally, MFS-type transporter; part of the cluster that mediates the biosynthesis of a highly modified cyclo-arginine-tryptophan dipeptide (cRW). The protein is MFS-type transporter avaJ of Aspergillus versicolor.